The primary structure comprises 321 residues: Glucokinase (321 aa).

10–15 (GDIGGT) contributes to the ATP binding site.

The protein belongs to the bacterial glucokinase family.

The protein localises to the cytoplasm. The enzyme catalyses D-glucose + ATP = D-glucose 6-phosphate + ADP + H(+). In Marinobacter nauticus (strain ATCC 700491 / DSM 11845 / VT8) (Marinobacter aquaeolei), this protein is Glucokinase.